Here is an 860-residue protein sequence, read N- to C-terminus: Glucans biosynthesis glucosyltransferase H (860 aa).

6 helical membrane passes run 141–161 (FILL…MKGI), 187–207 (VLPY…FCWV), 515–535 (VFLT…FLVL), 572–592 (LFST…MLIW), 599–619 (FGGV…SVLL), and 682–702 (FLWW…VSVI).

It belongs to the glycosyltransferase 2 family. OpgH subfamily.

The protein resides in the cell inner membrane. Its pathway is glycan metabolism; osmoregulated periplasmic glucan (OPG) biosynthesis. In terms of biological role, involved in the biosynthesis of osmoregulated periplasmic glucans (OPGs). This is Glucans biosynthesis glucosyltransferase H from Pseudomonas paraeruginosa (strain DSM 24068 / PA7) (Pseudomonas aeruginosa (strain PA7)).